We begin with the raw amino-acid sequence, 447 residues long: Rab GDP dissociation inhibitor alpha (447 aa).

A Phosphoserine modification is found at Ser427.

Belongs to the Rab GDI family. As to quaternary structure, interacts with RHOH. Interacts with the non-phosphorylated forms of RAB1A, RAB3A, RAB5A, RAB5B, RAB5C, RAB8A, RAB8B, RAB10, RAB12, RAB35, and RAB43. Interacts with RAB3A.

The protein resides in the cytoplasm. The protein localises to the golgi apparatus. Its subcellular location is the trans-Golgi network. Its function is as follows. Regulates the GDP/GTP exchange reaction of most Rab proteins by inhibiting the dissociation of GDP from them, and the subsequent binding of GTP to them. Promotes the dissociation of GDP-bound Rab proteins from the membrane and inhibits their activation. Promotes the dissociation of RAB1A, RAB3A, RAB5A and RAB10 from membranes. In Bos taurus (Bovine), this protein is Rab GDP dissociation inhibitor alpha (GDI1).